Consider the following 290-residue polypeptide: Glycine--tRNA ligase alpha subunit (290 aa).

The protein belongs to the class-II aminoacyl-tRNA synthetase family. In terms of assembly, tetramer of two alpha and two beta subunits.

The protein resides in the cytoplasm. It carries out the reaction tRNA(Gly) + glycine + ATP = glycyl-tRNA(Gly) + AMP + diphosphate. The chain is Glycine--tRNA ligase alpha subunit from Gloeobacter violaceus (strain ATCC 29082 / PCC 7421).